The following is a 550-amino-acid chain: Urocanate hydratase (550 aa).

Residues 48–49 (GG), Q126, 172–174 (GMG), E192, R197, 238–239 (NA), 259–263 (QTSAH), 268–269 (YL), and Y317 contribute to the NAD(+) site. C405 is a catalytic residue. Residue G487 coordinates NAD(+).

This sequence belongs to the urocanase family. It depends on NAD(+) as a cofactor.

The protein resides in the cytoplasm. The catalysed reaction is 4-imidazolone-5-propanoate = trans-urocanate + H2O. It functions in the pathway amino-acid degradation; L-histidine degradation into L-glutamate; N-formimidoyl-L-glutamate from L-histidine: step 2/3. Functionally, catalyzes the conversion of urocanate to 4-imidazolone-5-propionate. This is Urocanate hydratase from Saccharopolyspora erythraea (strain ATCC 11635 / DSM 40517 / JCM 4748 / NBRC 13426 / NCIMB 8594 / NRRL 2338).